The primary structure comprises 87 residues: Cell division topological specificity factor (87 aa).

This sequence belongs to the MinE family.

Prevents the cell division inhibition by proteins MinC and MinD at internal division sites while permitting inhibition at polar sites. This ensures cell division at the proper site by restricting the formation of a division septum at the midpoint of the long axis of the cell. In Neisseria gonorrhoeae (strain ATCC 700825 / FA 1090), this protein is Cell division topological specificity factor.